Reading from the N-terminus, the 82-residue chain is UPF0248 protein Mevan_1298 (82 aa).

This sequence belongs to the UPF0248 family.

The polypeptide is UPF0248 protein Mevan_1298 (Methanococcus vannielii (strain ATCC 35089 / DSM 1224 / JCM 13029 / OCM 148 / SB)).